Reading from the N-terminus, the 243-residue chain is Outer membrane protein A (243 aa).

5 beta stranded membrane-spanning segments follow: residues 1–8 (LAAKLSYP), 13–21 (LDIYTRLGG), 48–57 (PLAAVGVEYA), 62–69 (WATRLDYQ), and 88–96 (MLSLGVSYR). 5 tandem repeats follow at residues 104–105 (AP), 106–107 (AP), 108–109 (AP), 110–111 (AP), and 112–113 (AP). Residues 104 to 113 (APAPAPAPAP) are 5 X 2 AA tandem repeats of A-P. An OmpA-like domain is found at 115–243 (VETKLFTLKS…RRVEIEVKGI (129 aa)). Residues Cys215 and Cys229 are joined by a disulfide bond.

The protein belongs to the outer membrane OOP (TC 1.B.6) superfamily. OmpA family. In terms of assembly, monomer and homodimer.

The protein resides in the cell outer membrane. Functionally, with TolR probably plays a role in maintaining the position of the peptidoglycan cell wall in the periplasm. Acts as a porin with low permeability that allows slow penetration of small solutes; an internal gate slows down solute passage. This is Outer membrane protein A from Serratia odorifera.